The chain runs to 146 residues: UPF0178 protein BC_3040 (146 aa).

The protein belongs to the UPF0178 family.

This chain is UPF0178 protein BC_3040, found in Bacillus cereus (strain ATCC 14579 / DSM 31 / CCUG 7414 / JCM 2152 / NBRC 15305 / NCIMB 9373 / NCTC 2599 / NRRL B-3711).